The primary structure comprises 433 residues: PHO85 cyclin-10 (433 aa).

A compositionally biased stretch (basic and acidic residues) spans 1 to 10 (MDMTKNHTTD). 2 disordered regions span residues 1-20 (MDMTKNHTTDTEEFDDGDIR) and 51-81 (LTSEWDQSRSNTPGLAEGKTEKAQPCGTTDS). The span at 51-63 (LTSEWDQSRSNTP) shows a compositional bias: polar residues.

The protein belongs to the cyclin family. PHO80 subfamily. As to quaternary structure, forms a cyclin-CDK complex with PHO85. Interacts with GSY2, independent of the presence of PHO85.

It is found in the cytoplasm. Functionally, cyclin partner of the cyclin-dependent kinase (CDK) PHO85. Together with cyclin PCL8, negatively controls glycogen accumulation under favorable growth conditions. The PCL10-PHO85 cyclin-CDK holoenzyme has glycogen synthase kinase activity and phosphorylates and negatively regulates glycogen synthase GSY2. Also has minor GLC8 kinase activity. The protein is PHO85 cyclin-10 (PCL10) of Saccharomyces cerevisiae (strain ATCC 204508 / S288c) (Baker's yeast).